Reading from the N-terminus, the 437-residue chain is MKKTHITEQKFADLGLQPQVTEGLEKKGFEYCTPIQALALPVLLTGQDIAGQAQTGTGKTLAFLTATFNHLLTTPEHEGRQPTQPRAIIMAPTRELAIQIFNDAEPLIASTGLKAALAYGGESYDKQLAKLQDGVDILIGTTGRIIDFYKQRVFNLNNIQAVVLDEADRMFDLGFIKDIRFLFRRMPEPKERLNMLFSATLSYRVQELAFEHMHNPEHVVVEPAQKTGHRIQEELFYPSNEDKMALLQTLIEEEWPDRAIVFANTKHKCESVWGHLAADGHRVGLLTGDVPQKKREKILEQFTKGDVDILVATDVAARGLHIPQVTHVFNYDLPDDCEDYVHRIGRTGRAGASGHSISFACEEYAINLPAIEEYIEHTIPVSEYDASALIQDLPAPIRMRAPRVQQRRTNTGGTRSGNRKPQGRRPRQPRQSAPKQS.

Residues 9 to 37 carry the Q motif motif; the sequence is QKFADLGLQPQVTEGLEKKGFEYCTPIQA. The region spanning 40–219 is the Helicase ATP-binding domain; sequence LPVLLTGQDI…FEHMHNPEHV (180 aa). ATP is bound at residue 53-60; that stretch reads AQTGTGKT. The short motif at 165–168 is the DEAD box element; it reads DEAD. The 146-residue stretch at 245–390 folds into the Helicase C-terminal domain; that stretch reads ALLQTLIEEE…VSEYDASALI (146 aa). The disordered stretch occupies residues 397–437; sequence IRMRAPRVQQRRTNTGGTRSGNRKPQGRRPRQPRQSAPKQS. A compositionally biased stretch (basic residues) spans 417–428; the sequence is GNRKPQGRRPRQ.

This sequence belongs to the DEAD box helicase family. RhlB subfamily. Component of the RNA degradosome, which is a multiprotein complex involved in RNA processing and mRNA degradation.

The protein localises to the cytoplasm. The enzyme catalyses ATP + H2O = ADP + phosphate + H(+). DEAD-box RNA helicase involved in RNA degradation. Has RNA-dependent ATPase activity and unwinds double-stranded RNA. The chain is ATP-dependent RNA helicase RhlB from Vibrio parahaemolyticus serotype O3:K6 (strain RIMD 2210633).